The following is a 367-amino-acid chain: Peptide chain release factor 2 (367 aa).

N5-methylglutamine is present on Gln254.

Belongs to the prokaryotic/mitochondrial release factor family. Methylated by PrmC. Methylation increases the termination efficiency of RF2.

It is found in the cytoplasm. Its function is as follows. Peptide chain release factor 2 directs the termination of translation in response to the peptide chain termination codons UGA and UAA. This chain is Peptide chain release factor 2, found in Burkholderia cenocepacia (strain ATCC BAA-245 / DSM 16553 / LMG 16656 / NCTC 13227 / J2315 / CF5610) (Burkholderia cepacia (strain J2315)).